The primary structure comprises 121 residues: Peptidyl-tRNA hydrolase (121 aa).

Belongs to the PTH2 family.

The protein localises to the cytoplasm. The catalysed reaction is an N-acyl-L-alpha-aminoacyl-tRNA + H2O = an N-acyl-L-amino acid + a tRNA + H(+). The natural substrate for this enzyme may be peptidyl-tRNAs which drop off the ribosome during protein synthesis. This chain is Peptidyl-tRNA hydrolase, found in Sulfurisphaera tokodaii (strain DSM 16993 / JCM 10545 / NBRC 100140 / 7) (Sulfolobus tokodaii).